The sequence spans 166 residues: Olee1-like protein (166 aa).

The signal sequence occupies residues 1-23 (MAKSIIIQAPALCFLSLLGFAYS). 3 cysteine pairs are disulfide-bonded: Cys35/Cys106, Cys38/Cys150, and Cys59/Cys94.

This sequence belongs to the Ole e I family.

It localises to the secreted. The polypeptide is Olee1-like protein (Betula pendula (European white birch)).